The chain runs to 476 residues: Acyl-lipid omega-13 desaturase (476 aa).

Residues 10–75 enclose the Cytochrome b5 heme-binding domain; the sequence is GPALPSIPHQ…HLRVLERFRV (66 aa). H37 and H60 together coordinate heme. 2 helical membrane-spanning segments follow: residues 146–166 and 168–188; these read PFVI…KLWW and GAFI…AAMV. The Histidine box-1 signature appears at 189–193; it reads HDGGH. The Histidine box-2 signature appears at 224–229; sequence HNILHH. 3 consecutive transmembrane segments (helical) span residues 267-287, 315-335, and 343-363; these read FFSH…ISPL, YHST…TPFL, and LLLT…IAQV. The Histidine box-3 signature appears at 410–414; the sequence is QSLHH.

The protein belongs to the fatty acid desaturase type 1 family.

The protein localises to the membrane. The catalysed reaction is a (9Z,12Z)-octadecadienoyl-containing glycerolipid + 2 Fe(II)-[cytochrome b5] + O2 + 2 H(+) = a (5Z,9Z,12Z)-octadecatrienoyl-containing glycerolipid + 2 Fe(III)-[cytochrome b5] + 2 H2O. It catalyses the reaction (9Z,12Z,15Z)-octadecatrienoyl-containing glycerolipid + 2 Fe(II)-[cytochrome b5] + O2 + 2 H(+) = a (5Z,9Z,12Z,15Z)-octadecatetraenoyl-containing glycerolipid + 2 Fe(III)-[cytochrome b5] + 2 H2O. It functions in the pathway lipid metabolism; polyunsaturated fatty acid biosynthesis. Functionally, front-end desaturase having a omega-13 desaturase activity for omega-9 unsaturated C18/C20 fatty acids. Strong substrate preferences for linoleic acid and alpha-linolenic acid for the production of pinolenic and coniferonic acids respectively. No desaturase activity for dihomo gamma-linolenic acid and eicosatertraenoic acid. The protein is Acyl-lipid omega-13 desaturase of Chlamydomonas reinhardtii (Chlamydomonas smithii).